The following is a 428-amino-acid chain: uncharacterized protein (428 aa).

Transmembrane regions (helical) follow at residues 26–46 (VALT…DDVF), 51–71 (AGID…VSVL), 90–110 (AAPL…SALL), 135–155 (TPFL…TLVG), 177–197 (MAPA…WLLG), 223–243 (LLIK…AHPV), 278–298 (TLLF…TGVV), 314–334 (LLTV…IDNI), 359–379 (TFWW…AVAA), and 407–427 (VVTA…YFVF).

Belongs to the CitM (TC 2.A.11) transporter family.

Its subcellular location is the cell membrane. This is an uncharacterized protein from Mycobacterium tuberculosis (strain CDC 1551 / Oshkosh).